Reading from the N-terminus, the 392-residue chain is Gastricsin (392 aa).

Positions 1-16 are cleaved as a signal peptide; sequence MKWMVVALLCLPLLEA. A propeptide spans 17–62 (activation peptide); that stretch reads ALIRVPLKKMKSIRETMKEQGVLKDFLKNHKYDPGQKYHFGKFGDY. One can recognise a Peptidase A1 domain in the interval 76–389; it reads YYGEISIGTP…DMGNNRVGLA (314 aa). Residue Asp94 is part of the active site. 2 disulfides stabilise this stretch: Cys107/Cys112 and Cys270/Cys275. Asp280 is an active-site residue. Cys314 and Cys347 are disulfide-bonded.

This sequence belongs to the peptidase A1 family.

Its subcellular location is the secreted. It catalyses the reaction More restricted specificity than pepsin A, but shows preferential cleavage at Tyr-|-Xaa bonds. High activity on hemoglobin.. In terms of biological role, hydrolyzes a variety of proteins. In Mus musculus (Mouse), this protein is Gastricsin (Pgc).